The sequence spans 244 residues: Mannose-binding protein C (244 aa).

The signal sequence occupies residues 1 to 18; sequence MSIFTSFLLLCVVTVVYA. One can recognise a Collagen-like domain in the interval 38–96; the sequence is GLNGFPGKDGRDGAKGEKGEPGQGLRGLQGPPGKVGPTGPPGNPGLKGAVGPKGDRGDR. Residues 40 to 101 form a disordered region; it reads NGFPGKDGRD…DRGDRAEFDT (62 aa). The residue at position 43 (Pro43) is a 4-hydroxyproline. The segment covering 45–57 has biased composition (basic and acidic residues); sequence KDGRDGAKGEKGE. 4-hydroxyproline is present on residues Pro58, Pro69, Pro78, and Pro81. Low complexity predominate over residues 65–74; the sequence is LQGPPGKVGP. Positions 90–99 are enriched in basic and acidic residues; it reads KGDRGDRAEF. Residues 108–126 are a coiled coil; that stretch reads IAALRSELRALRNWVLFSL. A C-type lectin domain is found at 129 to 241; sequence KVGKKYFVSS…CSDSFLAICE (113 aa). 2 cysteine pairs are disulfide-bonded: Cys151/Cys240 and Cys218/Cys232. The N-linked (GlcNAc...) asparagine glycan is linked to Asn210.

As to quaternary structure, oligomeric complex of 3 or more homotrimers. Interacts with MASP1 and MASP2. Interacts with MEP1A and MEP1B and may inhibit their catalytic activity. In terms of processing, hydroxylation on proline residues within the sequence motif, GXPG, is most likely to be 4-hydroxy as this fits the requirement for 4-hydroxylation in vertebrates.

It is found in the secreted. In terms of biological role, calcium-dependent lectin involved in innate immune defense. Binds mannose, fucose and N-acetylglucosamine on different microorganisms and activates the lectin complement pathway. Binds to late apoptotic cells, as well as to apoptotic blebs and to necrotic cells, but not to early apoptotic cells, facilitating their uptake by macrophages. The protein is Mannose-binding protein C (Mbl2) of Mus musculus (Mouse).